Here is a 383-residue protein sequence, read N- to C-terminus: Micronemal protein 3 (383 aa).

The N-terminal stretch at 1 to 26 (MRGGTSALLHALTFSGAVWMCTPAEA) is a signal peptide. Residues 27–66 (LPIQKSVQLGSFDKVVPSREVVSESLAPSFAVTETHSSVQ) constitute a propeptide, required for proper sorting to micronemes. Residues 67-145 (SPSKQETQLC…HPDKSYGGDC (79 aa)) are lectin-like; required for the binding of host cells. Required for proper sorting to micronemes regions lie at residues 146-189 (SCEK…SEDP), 190-236 (CSKR…KRTG), and 237-290 (CHAF…LAEK). An EGF-like domain is found at 186 to 227 (SEDPCSKRGNAKCGPNGTCIVVDSVSYTCTCGDGETLVNLPE). Cystine bridges form between Cys-190-Cys-204 and Cys-198-Cys-214. N-linked (GlcNAc...) asparagine glycosylation occurs at Asn-201. The interval 294–359 (EFGISASSCK…HTVTCEKIKH (66 aa)) is involved in dimerization.

In terms of assembly, homodimer; dimerization is likely required for host cell binding but not for trafficking to micronemes. Post-translationally, removal of the propeptide occurs in a post-medial-Golgi compartment. Removal of the propeptide is required for the host cell binding. The presence of propeptide does not affect dimerization. The presence of propeptide does not affect sorting to micronemes.

It localises to the cytoplasmic vesicle. The protein localises to the secretory vesicle. It is found in the microneme. Its subcellular location is the secreted. The protein resides in the golgi apparatus. It localises to the endoplasmic reticulum. Adhesin; can bind both the host cells and the parasites. May be involved in parasite invasion by acting as a bridge between the parasite and the host cell. Triggers innate immune responses in mouse macrophages via the TLR11/MyD88/NF-kappa-B pathway. Induces TNF/TNF-alpha secretion in mouse macrophages. Induces secretion of IL6 in mouse and human macrophages likely via different mechanisms. Up-regulates expression of NOS2/iNOS in mouse macrophages. Induces mouse macrophage polarization. This is Micronemal protein 3 from Toxoplasma gondii.